Here is a 98-residue protein sequence, read N- to C-terminus: MPRIVNPLDEMLFKEVLKEQQRIRVYTERARYGKIKTIIEGIDEKEFDLEEIAKKLKAKLACGGTAKNGRIELQGDHRDRIKKLLAELGFSEDLIEVE.

Belongs to the SUI1 family.

The polypeptide is Protein translation factor SUI1 homolog (Pyrococcus abyssi (strain GE5 / Orsay)).